The chain runs to 124 residues: Small ribosomal subunit protein uS12 (124 aa).

D89 is subject to 3-methylthioaspartic acid. Positions 104 to 124 (SAGVQNRNRGRSKYGTKRPKK) are disordered. Basic residues predominate over residues 111–124 (NRGRSKYGTKRPKK).

Belongs to the universal ribosomal protein uS12 family. As to quaternary structure, part of the 30S ribosomal subunit. Contacts proteins S8 and S17. May interact with IF1 in the 30S initiation complex.

In terms of biological role, with S4 and S5 plays an important role in translational accuracy. Its function is as follows. Interacts with and stabilizes bases of the 16S rRNA that are involved in tRNA selection in the A site and with the mRNA backbone. Located at the interface of the 30S and 50S subunits, it traverses the body of the 30S subunit contacting proteins on the other side and probably holding the rRNA structure together. The combined cluster of proteins S8, S12 and S17 appears to hold together the shoulder and platform of the 30S subunit. This Pelotomaculum thermopropionicum (strain DSM 13744 / JCM 10971 / SI) protein is Small ribosomal subunit protein uS12.